A 247-amino-acid polypeptide reads, in one-letter code: 2,3-bisphosphoglycerate-dependent phosphoglycerate mutase (247 aa).

Substrate is bound by residues 8–15, 21–22, R60, 87–90, K98, 114–115, and 183–184; these read RHGESQWN, TG, ERHY, RR, and GN. Residue H9 is the Tele-phosphohistidine intermediate of the active site. E87 serves as the catalytic Proton donor/acceptor.

Belongs to the phosphoglycerate mutase family. BPG-dependent PGAM subfamily.

It catalyses the reaction (2R)-2-phosphoglycerate = (2R)-3-phosphoglycerate. It functions in the pathway carbohydrate degradation; glycolysis; pyruvate from D-glyceraldehyde 3-phosphate: step 3/5. Catalyzes the interconversion of 2-phosphoglycerate and 3-phosphoglycerate. This is 2,3-bisphosphoglycerate-dependent phosphoglycerate mutase from Chlorobium phaeobacteroides (strain BS1).